The chain runs to 431 residues: tRNA-2-methylthio-N(6)-dimethylallyladenosine synthase (431 aa).

The MTTase N-terminal domain maps to 2 to 117 (KKLFIETLGC…ITEVVDKKHA (116 aa)). 6 residues coordinate [4Fe-4S] cluster: cysteine 11, cysteine 48, cysteine 80, cysteine 149, cysteine 153, and cysteine 156. One can recognise a Radical SAM core domain in the interval 135–368 (RTNPFKAMVN…QTRHTEILDE (234 aa)). The TRAM domain maps to 371 to 431 (DAQLGKVHEV…SRGALDGVLV (61 aa)).

Belongs to the methylthiotransferase family. MiaB subfamily. As to quaternary structure, monomer. [4Fe-4S] cluster is required as a cofactor.

Its subcellular location is the cytoplasm. The enzyme catalyses N(6)-dimethylallyladenosine(37) in tRNA + (sulfur carrier)-SH + AH2 + 2 S-adenosyl-L-methionine = 2-methylsulfanyl-N(6)-dimethylallyladenosine(37) in tRNA + (sulfur carrier)-H + 5'-deoxyadenosine + L-methionine + A + S-adenosyl-L-homocysteine + 2 H(+). Its function is as follows. Catalyzes the methylthiolation of N6-(dimethylallyl)adenosine (i(6)A), leading to the formation of 2-methylthio-N6-(dimethylallyl)adenosine (ms(2)i(6)A) at position 37 in tRNAs that read codons beginning with uridine. In Sulfurovum sp. (strain NBC37-1), this protein is tRNA-2-methylthio-N(6)-dimethylallyladenosine synthase.